The chain runs to 274 residues: Trehalose transport system permease protein SugB (274 aa).

A run of 6 helical transmembrane segments spans residues 8 to 28, 70 to 90, 102 to 122, 137 to 157, 182 to 202, and 239 to 259; these read YWAVLDTLVVGYALLPVLWIF, IGIGLITTVIAVVLGAMAAYA, LIGAALLITMFPSISLVTPLF, LILPYITFALPLAIYTLSAFF, VIVPLAAPGLVTAAILVFIFA, and GSIAAGAIVITIPIIVFVLIF. In terms of domain architecture, ABC transmembrane type-1 spans 66-259; that stretch reads LINSIGIGLI…IPIIVFVLIF (194 aa).

This sequence belongs to the binding-protein-dependent transport system permease family. In terms of assembly, the complex is composed of two ATP-binding proteins (SugC), two transmembrane proteins (Suga and SugB) and a solute-binding protein (LpqY).

The protein localises to the cell inner membrane. Its function is as follows. Part of the ABC transporter complex LpqY-SugA-SugB-SugC, which is highly specific for uptake of trehalose. Involved in the recycling of extracellular trehalose released from trehalose-containing molecules synthesized by M.tuberculosis. Trehalose uptake is essential for virulence. Probably responsible for the translocation of the substrate across the membrane. The chain is Trehalose transport system permease protein SugB (sugB) from Mycobacterium tuberculosis (strain CDC 1551 / Oshkosh).